Reading from the N-terminus, the 264-residue chain is Late embryogenesis abundant protein D-34 (264 aa).

Residues 1-16 (MSQGQPRRPQQPAGQG) are compositionally biased toward low complexity. Residues 1–23 (MSQGQPRRPQQPAGQGENQEPIK) are disordered. 3 SMP domains span residues 22–76 (IKYG…RNEQ), 138–194 (ITIG…AHNA), and 203–261 (IKLN…LNEN).

The protein belongs to the LEA type SMP family.

In terms of biological role, LEA proteins are late embryonic proteins abundant in higher plant seed embryos. There are two subsets of LEA proteins (5a and 5b), the first ones are expressed when the cotyledon weight reach 80 mg and the second set are expressed above 100 mg. The function of those proteins is not known. The polypeptide is Late embryogenesis abundant protein D-34 (Gossypium hirsutum (Upland cotton)).